The primary structure comprises 112 residues: 2Fe-2S ferredoxin (112 aa).

The 103-residue stretch at I5–T107 folds into the 2Fe-2S ferredoxin-type domain. The [2Fe-2S] cluster site is built by C42, C48, C51, and C88.

The protein belongs to the adrenodoxin/putidaredoxin family. Requires [2Fe-2S] cluster as cofactor.

Ferredoxin are iron-sulfur proteins that transfer electrons in a wide variety of metabolic reactions. The chain is 2Fe-2S ferredoxin (fdxB) from Rickettsia montanensis.